A 200-amino-acid chain; its full sequence is Phospholipase A2 inhibitor gamma subunit B (200 aa).

The first 19 residues, 1-19 (MKSFLFCCLLGTFLAIGMC), serve as a signal peptide directing secretion. 8 cysteine pairs are disulfide-bonded: C22-C46, C25-C32, C39-C67, C73-C94, C95-C100, C120-C145, C138-C165, and C171-C191. N33 carries an N-linked (GlcNAc...) asparagine glycan.

The protein belongs to the CNF-like-inhibitor family. As to quaternary structure, heterodimer of subunit A and subunit B. In terms of tissue distribution, expressed by the liver.

Its subcellular location is the secreted. Its function is as follows. Inhibits the enzymatic activity of phospholipase A2 (PA2). In Gloydius brevicaudus siniticus (Chinese mamushi), this protein is Phospholipase A2 inhibitor gamma subunit B.